The primary structure comprises 206 residues: Crossover junction endodeoxyribonuclease RuvC (206 aa).

Active-site residues include aspartate 7, glutamate 67, and aspartate 138. Residues aspartate 7, glutamate 67, and aspartate 138 each contribute to the Mg(2+) site.

This sequence belongs to the RuvC family. As to quaternary structure, homodimer which binds Holliday junction (HJ) DNA. The HJ becomes 2-fold symmetrical on binding to RuvC with unstacked arms; it has a different conformation from HJ DNA in complex with RuvA. In the full resolvosome a probable DNA-RuvA(4)-RuvB(12)-RuvC(2) complex forms which resolves the HJ. The cofactor is Mg(2+).

Its subcellular location is the cytoplasm. The enzyme catalyses Endonucleolytic cleavage at a junction such as a reciprocal single-stranded crossover between two homologous DNA duplexes (Holliday junction).. In terms of biological role, the RuvA-RuvB-RuvC complex processes Holliday junction (HJ) DNA during genetic recombination and DNA repair. Endonuclease that resolves HJ intermediates. Cleaves cruciform DNA by making single-stranded nicks across the HJ at symmetrical positions within the homologous arms, yielding a 5'-phosphate and a 3'-hydroxyl group; requires a central core of homology in the junction. The consensus cleavage sequence is 5'-(A/T)TT(C/G)-3'. Cleavage occurs on the 3'-side of the TT dinucleotide at the point of strand exchange. HJ branch migration catalyzed by RuvA-RuvB allows RuvC to scan DNA until it finds its consensus sequence, where it cleaves and resolves the cruciform DNA. This is Crossover junction endodeoxyribonuclease RuvC from Anaeromyxobacter sp. (strain Fw109-5).